A 279-amino-acid chain; its full sequence is Phosphatidylglycerol--prolipoprotein diacylglyceryl transferase (279 aa).

Transmembrane regions (helical) follow at residues 25–45 (WYGL…KFFV), 60–80 (YFIW…ILIY), 103–123 (FVGI…IATI), 133–153 (LWSL…FGRI), 181–201 (PSQL…LYFY), 209–229 (GELI…TEFL), and 236–256 (IGYF…MLIL). An a 1,2-diacyl-sn-glycero-3-phospho-(1'-sn-glycerol)-binding site is contributed by Arg-152.

It belongs to the Lgt family.

It localises to the cell inner membrane. It catalyses the reaction L-cysteinyl-[prolipoprotein] + a 1,2-diacyl-sn-glycero-3-phospho-(1'-sn-glycerol) = an S-1,2-diacyl-sn-glyceryl-L-cysteinyl-[prolipoprotein] + sn-glycerol 1-phosphate + H(+). Its pathway is protein modification; lipoprotein biosynthesis (diacylglyceryl transfer). Functionally, catalyzes the transfer of the diacylglyceryl group from phosphatidylglycerol to the sulfhydryl group of the N-terminal cysteine of a prolipoprotein, the first step in the formation of mature lipoproteins. This Campylobacter hominis (strain ATCC BAA-381 / DSM 21671 / CCUG 45161 / LMG 19568 / NCTC 13146 / CH001A) protein is Phosphatidylglycerol--prolipoprotein diacylglyceryl transferase.